Consider the following 294-residue polypeptide: ATP synthase gamma chain (294 aa).

The protein belongs to the ATPase gamma chain family. As to quaternary structure, F-type ATPases have 2 components, CF(1) - the catalytic core - and CF(0) - the membrane proton channel. CF(1) has five subunits: alpha(3), beta(3), gamma(1), delta(1), epsilon(1). CF(0) has three main subunits: a, b and c.

The protein resides in the cell membrane. In terms of biological role, produces ATP from ADP in the presence of a proton gradient across the membrane. The gamma chain is believed to be important in regulating ATPase activity and the flow of protons through the CF(0) complex. In Opitutus terrae (strain DSM 11246 / JCM 15787 / PB90-1), this protein is ATP synthase gamma chain.